A 269-amino-acid polypeptide reads, in one-letter code: MAILQTFSEQTISSARASDIKEPDYSVNSRPEICFFLNGIMEEKSLISLYLARDSHSAILSSILAVDPQQKLLIMDYGINETLNQIALKRGYLRCITSHNQIRIEFDCDNLQRVQFEGRHAFSADIPESLKRLQRRNFYRVTTSITNPAVCTIPLLRAADEAPVVYSLLDISCGGMALIDQPDADTLLKAGTTLEHCRIDLPGDGNLFSSIEASIQIAYVGTVILNNGNTCPRIGCEFINLPEKSRLLIQRYITKLEQQARKLETESGF.

Positions 134 to 254 (QRRNFYRVTT…SRLLIQRYIT (121 aa)) constitute a PilZ domain.

It belongs to the YcgR family. Monomer. Interacts with the flagellar basal bodies.

The protein resides in the bacterial flagellum basal body. Functionally, acts as a flagellar brake, regulating swimming and swarming in a bis-(3'-5') cyclic diguanylic acid (c-di-GMP)-dependent manner. Binds 1 c-di-GMP dimer per subunit. Increasing levels of c-di-GMP lead to decreased motility. The polypeptide is Flagellar brake protein YcgR (Nitrosomonas eutropha (strain DSM 101675 / C91 / Nm57)).